Here is a 316-residue protein sequence, read N- to C-terminus: Ribosomal RNA small subunit methyltransferase A (316 aa).

S-adenosyl-L-methionine is bound by residues Asn33, Val35, Gly60, Glu81, Asp110, and Asn133.

The protein belongs to the class I-like SAM-binding methyltransferase superfamily. rRNA adenine N(6)-methyltransferase family. RsmA subfamily.

The protein localises to the cytoplasm. The catalysed reaction is adenosine(1518)/adenosine(1519) in 16S rRNA + 4 S-adenosyl-L-methionine = N(6)-dimethyladenosine(1518)/N(6)-dimethyladenosine(1519) in 16S rRNA + 4 S-adenosyl-L-homocysteine + 4 H(+). Functionally, specifically dimethylates two adjacent adenosines (A1518 and A1519) in the loop of a conserved hairpin near the 3'-end of 16S rRNA in the 30S particle. May play a critical role in biogenesis of 30S subunits. The polypeptide is Ribosomal RNA small subunit methyltransferase A (Corynebacterium jeikeium (strain K411)).